The sequence spans 548 residues: Probable malate:quinone oxidoreductase (548 aa).

Residues aspartate 521–leucine 548 are disordered. A compositionally biased stretch (low complexity) spans proline 530–lysine 541.

It belongs to the MQO family. It depends on FAD as a cofactor.

It catalyses the reaction (S)-malate + a quinone = a quinol + oxaloacetate. The protein operates within carbohydrate metabolism; tricarboxylic acid cycle; oxaloacetate from (S)-malate (quinone route): step 1/1. This chain is Probable malate:quinone oxidoreductase, found in Escherichia coli (strain UTI89 / UPEC).